The following is a 340-amino-acid chain: tRNA N6-adenosine threonylcarbamoyltransferase (340 aa).

Fe cation-binding residues include histidine 111 and histidine 115. Substrate contacts are provided by residues 134-138 (IISGA), aspartate 167, glycine 180, and asparagine 273. Residue aspartate 301 coordinates Fe cation.

The protein belongs to the KAE1 / TsaD family. Fe(2+) is required as a cofactor.

Its subcellular location is the cytoplasm. It carries out the reaction L-threonylcarbamoyladenylate + adenosine(37) in tRNA = N(6)-L-threonylcarbamoyladenosine(37) in tRNA + AMP + H(+). Required for the formation of a threonylcarbamoyl group on adenosine at position 37 (t(6)A37) in tRNAs that read codons beginning with adenine. Is involved in the transfer of the threonylcarbamoyl moiety of threonylcarbamoyl-AMP (TC-AMP) to the N6 group of A37, together with TsaE and TsaB. TsaD likely plays a direct catalytic role in this reaction. This Wigglesworthia glossinidia brevipalpis protein is tRNA N6-adenosine threonylcarbamoyltransferase.